We begin with the raw amino-acid sequence, 160 residues long: Phosphopantetheine adenylyltransferase (160 aa).

Residue Ser-9 participates in substrate binding. ATP-binding positions include 9 to 10 (SF) and His-17. Substrate-binding residues include Lys-41, Thr-73, and Arg-87. ATP contacts are provided by residues 88–90 (GMR), Glu-98, and 123–129 (YTFFSSS).

It belongs to the bacterial CoaD family. As to quaternary structure, homohexamer. Mg(2+) is required as a cofactor.

The protein localises to the cytoplasm. It catalyses the reaction (R)-4'-phosphopantetheine + ATP + H(+) = 3'-dephospho-CoA + diphosphate. Its pathway is cofactor biosynthesis; coenzyme A biosynthesis; CoA from (R)-pantothenate: step 4/5. Functionally, reversibly transfers an adenylyl group from ATP to 4'-phosphopantetheine, yielding dephospho-CoA (dPCoA) and pyrophosphate. The sequence is that of Phosphopantetheine adenylyltransferase from Roseiflexus sp. (strain RS-1).